Here is a 170-residue protein sequence, read N- to C-terminus: Peptide deformylase (170 aa).

2 residues coordinate Fe cation: C93 and H135. The active site involves E136. Residue H139 participates in Fe cation binding.

The protein belongs to the polypeptide deformylase family. It depends on Fe(2+) as a cofactor.

The catalysed reaction is N-terminal N-formyl-L-methionyl-[peptide] + H2O = N-terminal L-methionyl-[peptide] + formate. Its function is as follows. Removes the formyl group from the N-terminal Met of newly synthesized proteins. Requires at least a dipeptide for an efficient rate of reaction. N-terminal L-methionine is a prerequisite for activity but the enzyme has broad specificity at other positions. The polypeptide is Peptide deformylase (Syntrophobacter fumaroxidans (strain DSM 10017 / MPOB)).